Here is a 98-residue protein sequence, read N- to C-terminus: EKC/KEOPS complex subunit GON7 (98 aa).

Met-1 is modified (N-acetylmethionine). The segment at 55–98 (DAQGLAEDPDDALDGDDEDDAEDENNSGRTNSDGPSAKRPKPAS) is disordered. Positions 61-79 (EDPDDALDGDDEDDAEDEN) are enriched in acidic residues.

In terms of assembly, component of the EKC/KEOPS complex composed of at least GON7, TP53RK, TPRKB, OSGEP and LAGE3; the whole complex dimerizes.

It is found in the nucleus. Functionally, component of the EKC/KEOPS complex that is required for the formation of a threonylcarbamoyl group on adenosine at position 37 (t(6)A37) in tRNAs that read codons beginning with adenine. The complex is probably involved in the transfer of the threonylcarbamoyl moiety of threonylcarbamoyl-AMP (TC-AMP) to the N6 group of A37. GON7 plays a supporting role to the catalytic subunit OSGEP in the complex. This Mus musculus (Mouse) protein is EKC/KEOPS complex subunit GON7.